The primary structure comprises 511 residues: 2'-acyl-2-O-sulfo-trehalose (hydroxy)phthioceranyltransferase PapA1 (511 aa).

Belongs to the PapA acyltransferase family.

The enzyme catalyses a (hydroxy)phthioceranyl-[(hydroxy)phthioceranic acid synthase] + 2'-palmitoyl/stearoyl-2-O-sulfo-alpha,alpha-trehalose = a 3'-(hydroxy)phthioceranyl-2'-palmitoyl/stearoyl-2-O-sulfo-alpha,alpha-trehalose + holo-[(hydroxy)phthioceranic acid synthase].. In terms of biological role, catalyzes the acylation of trehalose-2-sulfate-2'-palmitate (SL659) by adding the (hydroxy)phthioceranoyl group at the 3'-position to yield the diacylated intermediate 2-palmitoyl-3-(C43)-phthioceranyl-alpha, alpha'-D-trehalose-2'-sulfate (SL1278). The chain is 2'-acyl-2-O-sulfo-trehalose (hydroxy)phthioceranyltransferase PapA1 (papA1) from Mycobacterium bovis (strain BCG / Pasteur 1173P2).